The primary structure comprises 246 residues: 1-(5-phosphoribosyl)-5-[(5-phosphoribosylamino)methylideneamino] imidazole-4-carboxamide isomerase (246 aa).

Aspartate 8 serves as the catalytic Proton acceptor. The Proton donor role is filled by aspartate 130.

This sequence belongs to the HisA/HisF family.

The protein localises to the cytoplasm. The enzyme catalyses 1-(5-phospho-beta-D-ribosyl)-5-[(5-phospho-beta-D-ribosylamino)methylideneamino]imidazole-4-carboxamide = 5-[(5-phospho-1-deoxy-D-ribulos-1-ylimino)methylamino]-1-(5-phospho-beta-D-ribosyl)imidazole-4-carboxamide. It participates in amino-acid biosynthesis; L-histidine biosynthesis; L-histidine from 5-phospho-alpha-D-ribose 1-diphosphate: step 4/9. This Alcanivorax borkumensis (strain ATCC 700651 / DSM 11573 / NCIMB 13689 / SK2) protein is 1-(5-phosphoribosyl)-5-[(5-phosphoribosylamino)methylideneamino] imidazole-4-carboxamide isomerase.